The sequence spans 369 residues: Histidinol-phosphate aminotransferase (369 aa).

Residue K222 is modified to N6-(pyridoxal phosphate)lysine.

It belongs to the class-II pyridoxal-phosphate-dependent aminotransferase family. Histidinol-phosphate aminotransferase subfamily. As to quaternary structure, homodimer. Pyridoxal 5'-phosphate is required as a cofactor.

The catalysed reaction is L-histidinol phosphate + 2-oxoglutarate = 3-(imidazol-4-yl)-2-oxopropyl phosphate + L-glutamate. It functions in the pathway amino-acid biosynthesis; L-histidine biosynthesis; L-histidine from 5-phospho-alpha-D-ribose 1-diphosphate: step 7/9. The chain is Histidinol-phosphate aminotransferase from Halalkalibacterium halodurans (strain ATCC BAA-125 / DSM 18197 / FERM 7344 / JCM 9153 / C-125) (Bacillus halodurans).